The following is a 604-amino-acid chain: Inactive all-trans-retinol 13,14-reductase (604 aa).

Residues 1–17 form the signal peptide; sequence MWWILLFLEWFVDWARG.

The protein belongs to the carotenoid/retinoid oxidoreductase family. CrtISO subfamily.

The polypeptide is Inactive all-trans-retinol 13,14-reductase (retsatl) (Danio rerio (Zebrafish)).